The primary structure comprises 378 residues: Probable dihydroorotase-like protein (378 aa).

It belongs to the metallo-dependent hydrolases superfamily. DHOase family. PyrC' subfamily.

Functionally, non-functional DHOase. This Helicobacter pylori (strain J99 / ATCC 700824) (Campylobacter pylori J99) protein is Probable dihydroorotase-like protein (pyrC').